The sequence spans 84 residues: Small ribosomal subunit protein bS16 (84 aa).

Belongs to the bacterial ribosomal protein bS16 family.

The protein is Small ribosomal subunit protein bS16 of Desulforapulum autotrophicum (strain ATCC 43914 / DSM 3382 / VKM B-1955 / HRM2) (Desulfobacterium autotrophicum).